Reading from the N-terminus, the 177-residue chain is MSELTTIARPYAKAAFEFAVEHKAVDQWLGMLGFAAQVAENETIHNLVHGSVAAEELANLFVGVCGEQLDEHGQNLIRVMAENGRLGVLPAVLAEFVAFKAELDKEVQADVISAIELTDQQKANIQASLEKRLARKVKLNCSMDASLMAGVLIKAGDLVIDGSVRGKLDRMADALQS.

The protein belongs to the ATPase delta chain family. F-type ATPases have 2 components, F(1) - the catalytic core - and F(0) - the membrane proton channel. F(1) has five subunits: alpha(3), beta(3), gamma(1), delta(1), epsilon(1). F(0) has three main subunits: a(1), b(2) and c(10-14). The alpha and beta chains form an alternating ring which encloses part of the gamma chain. F(1) is attached to F(0) by a central stalk formed by the gamma and epsilon chains, while a peripheral stalk is formed by the delta and b chains.

It localises to the cell inner membrane. F(1)F(0) ATP synthase produces ATP from ADP in the presence of a proton or sodium gradient. F-type ATPases consist of two structural domains, F(1) containing the extramembraneous catalytic core and F(0) containing the membrane proton channel, linked together by a central stalk and a peripheral stalk. During catalysis, ATP synthesis in the catalytic domain of F(1) is coupled via a rotary mechanism of the central stalk subunits to proton translocation. Its function is as follows. This protein is part of the stalk that links CF(0) to CF(1). It either transmits conformational changes from CF(0) to CF(1) or is implicated in proton conduction. The polypeptide is ATP synthase subunit delta (Aeromonas salmonicida (strain A449)).